Consider the following 377-residue polypeptide: Succinyl-diaminopimelate desuccinylase (377 aa).

Position 66 (H66) interacts with Zn(2+). D68 is an active-site residue. D99 serves as a coordination point for Zn(2+). E133 functions as the Proton acceptor in the catalytic mechanism. 3 residues coordinate Zn(2+): E134, E162, and H348.

The protein belongs to the peptidase M20A family. DapE subfamily. In terms of assembly, homodimer. Requires Zn(2+) as cofactor. It depends on Co(2+) as a cofactor.

It carries out the reaction N-succinyl-(2S,6S)-2,6-diaminopimelate + H2O = (2S,6S)-2,6-diaminopimelate + succinate. It functions in the pathway amino-acid biosynthesis; L-lysine biosynthesis via DAP pathway; LL-2,6-diaminopimelate from (S)-tetrahydrodipicolinate (succinylase route): step 3/3. In terms of biological role, catalyzes the hydrolysis of N-succinyl-L,L-diaminopimelic acid (SDAP), forming succinate and LL-2,6-diaminopimelate (DAP), an intermediate involved in the bacterial biosynthesis of lysine and meso-diaminopimelic acid, an essential component of bacterial cell walls. The chain is Succinyl-diaminopimelate desuccinylase from Histophilus somni (strain 129Pt) (Haemophilus somnus).